A 179-amino-acid chain; its full sequence is Large ribosomal subunit protein uL6 (179 aa).

It belongs to the universal ribosomal protein uL6 family. As to quaternary structure, part of the 50S ribosomal subunit.

In terms of biological role, this protein binds to the 23S rRNA, and is important in its secondary structure. It is located near the subunit interface in the base of the L7/L12 stalk, and near the tRNA binding site of the peptidyltransferase center. The polypeptide is Large ribosomal subunit protein uL6 (Mycobacterium avium (strain 104)).